A 265-amino-acid polypeptide reads, in one-letter code: MALGRLSSRTLAAMLLALFLGGPALASEIVGGRPARPHAWPFMASLQRRGGHFCGATLIARNFVMSAAHCVNGLNFRSVQVVLGAHDLRRQERTRQTFSVQRIFENGFDPSQLLNDIVIIQLNGSATINANVQVAQLPAQGQGVGDRTPCLAMGWGRLGTNRPSPSVLQELNVTVVTNMCRRRVNVCTLVPRRQAGICFGDSGGPLVCNNLVQGIDSFIRGGCGSGLYPDAFAPVAEFADWINSIIRSHNDHLLTHPKDREGRTN.

The N-terminal stretch at 1-26 is a signal peptide; the sequence is MALGRLSSRTLAAMLLALFLGGPALA. A Peptidase S1 domain is found at 29 to 247; that stretch reads IVGGRPARPH…FADWINSIIR (219 aa). Cys-54 and Cys-70 are oxidised to a cystine. Residues His-69 and Asp-116 each act as charge relay system in the active site. 2 N-linked (GlcNAc...) asparagine glycosylation sites follow: Asn-123 and Asn-172. Intrachain disulfides connect Cys-150/Cys-208, Cys-180/Cys-187, and Cys-198/Cys-223. Ser-202 serves as the catalytic Charge relay system.

Belongs to the peptidase S1 family. Elastase subfamily. Interacts with NOTCH2NL.

The enzyme catalyses Hydrolysis of proteins, including elastin. Preferential cleavage: Val-|-Xaa &gt; Ala-|-Xaa.. Its function is as follows. Serine protease that modifies the functions of natural killer cells, monocytes and granulocytes. Inhibits C5a-dependent neutrophil enzyme release and chemotaxis. Promotes blood coagulation. Through the activation of the platelet fibrinogen receptor integrin alpha-IIb/beta-3, potentiates platelet aggregation induced by a threshold concentration of cathepsin G (CTSG). Cleaves and thus inactivates tissue factor pathway inhibitor (TFPI). Capable of killing E.coli; probably digests outer membrane protein A (ompA) in E.coli. This is Neutrophil elastase (Elane) from Mus musculus (Mouse).